Reading from the N-terminus, the 245-residue chain is GDSL esterase/lipase At4g16220 (245 aa).

Residues 1 to 24 form the signal peptide; that stretch reads MSSLVSRCQVIALLVLFFFGVCLA. Ser37 serves as the catalytic Nucleophile.

This sequence belongs to the 'GDSL' lipolytic enzyme family.

The protein localises to the secreted. In Arabidopsis thaliana (Mouse-ear cress), this protein is GDSL esterase/lipase At4g16220.